We begin with the raw amino-acid sequence, 335 residues long: GTPase Obg (335 aa).

The region spanning 4–162 is the Obg domain; that stretch reads GNFVDYTKIY…ADIVLELKVL (159 aa). An OBG-type G domain is found at 163–332; it reads ADVGLVGFPN…LKDKLWAMLN (170 aa). GTP contacts are provided by residues 169–176, 194–198, 216–219, 283–286, and 313–315; these read GFPNAGKS, FTTLK, DIPG, SKCD, and SSI. Positions 176 and 196 each coordinate Mg(2+).

It belongs to the TRAFAC class OBG-HflX-like GTPase superfamily. OBG GTPase family. Monomer. It depends on Mg(2+) as a cofactor.

Its subcellular location is the cytoplasm. In terms of biological role, an essential GTPase which binds GTP, GDP and possibly (p)ppGpp with moderate affinity, with high nucleotide exchange rates and a fairly low GTP hydrolysis rate. Plays a role in control of the cell cycle, stress response, ribosome biogenesis and in those bacteria that undergo differentiation, in morphogenesis control. This chain is GTPase Obg, found in Flavobacterium psychrophilum (strain ATCC 49511 / DSM 21280 / CIP 103535 / JIP02/86).